The primary structure comprises 382 residues: Inactive serine protease 54 (382 aa).

Residues 1–20 (MAELRGILLLLLYMSHSSSA) form the signal peptide. The Peptidase S1 domain occupies 29-258 (IVDQLHENLV…YSNWIIAKTR (230 aa)). Residue N113 is glycosylated (N-linked (GlcNAc...) asparagine). 3 disulfide bridges follow: C154–C216, C185–C195, and C206–C237.

The protein belongs to the peptidase S1 family. Plasma kallikrein subfamily.

It is found in the secreted. This Rattus norvegicus (Rat) protein is Inactive serine protease 54 (Prss54).